Here is a 449-residue protein sequence, read N- to C-terminus: Trigger factor (449 aa).

The 86-residue stretch at 169-254 (GDRITVDFVG…AKQVEAPGEL (86 aa)) folds into the PPIase FKBP-type domain.

The protein belongs to the FKBP-type PPIase family. Tig subfamily.

Its subcellular location is the cytoplasm. It catalyses the reaction [protein]-peptidylproline (omega=180) = [protein]-peptidylproline (omega=0). Functionally, involved in protein export. Acts as a chaperone by maintaining the newly synthesized protein in an open conformation. Functions as a peptidyl-prolyl cis-trans isomerase. The polypeptide is Trigger factor (Azorhizobium caulinodans (strain ATCC 43989 / DSM 5975 / JCM 20966 / LMG 6465 / NBRC 14845 / NCIMB 13405 / ORS 571)).